The chain runs to 609 residues: UvrABC system protein C (609 aa).

In terms of domain architecture, GIY-YIG spans 15 to 92; it reads TGSGVYQMQD…IKQFRPRYNV (78 aa). The UVR domain occupies 202–237; the sequence is DQVIIKLTERMEVASENLVFEEAAHYRDQIRQLRRL.

Belongs to the UvrC family. As to quaternary structure, interacts with UvrB in an incision complex.

It is found in the cytoplasm. In terms of biological role, the UvrABC repair system catalyzes the recognition and processing of DNA lesions. UvrC both incises the 5' and 3' sides of the lesion. The N-terminal half is responsible for the 3' incision and the C-terminal half is responsible for the 5' incision. The sequence is that of UvrABC system protein C from Coxiella burnetii (strain RSA 331 / Henzerling II).